Here is a 179-residue protein sequence, read N- to C-terminus: Large ribosomal subunit protein uL6 (179 aa).

The protein belongs to the universal ribosomal protein uL6 family. As to quaternary structure, part of the 50S ribosomal subunit.

In terms of biological role, this protein binds to the 23S rRNA, and is important in its secondary structure. It is located near the subunit interface in the base of the L7/L12 stalk, and near the tRNA binding site of the peptidyltransferase center. The polypeptide is Large ribosomal subunit protein uL6 (Mycoplasmopsis pulmonis (strain UAB CTIP) (Mycoplasma pulmonis)).